Consider the following 637-residue polypeptide: MGRIIGIDLGTTNSCVAVLDGDKPRVLENAEGERTTASVIAYTEGETLVGQPAKRQAVTNPQNTLYAIKRLIGRRFEDEEVQRDIEIMPFNIVKADNGDAWVEAQGQKMAAPQVSAEVLKKMKKTAEDFLGEEVTGAVVTVPAYFNDAQRQATKDAGRIAGLDVKRIINEPTAAALAYGLDKQGGDRTIAVYDLGGGTFDISIIEIDEVEGEKTFEVLSTNGDTHLGGEDFDNRMINYLVDEFKKEQGIDLKADPLAMQRVKEAAEKAKIELSSTTQTDVNLPYVTADATGPKHMNIKVTRAKLESLVEDLVQRSLEPLKVALADADLSVGEITDVILVGGQTRMPMVQAKVTEFFGKEPRKDVNPDEAVAMGAAVQGGVLAGEVKDVLLLDVTPLSFGIETMGGVMTKLIEKNTTIPTKADQVFSTAEDNQSAVTIHVLQGERKQATYNKSLGQFNLEGIQPAPRGMPQVEVTFDLDADGILNVSAKDKATGKEQKITIQASGGLSEEEIEAMVQEAEANKEADKKFEELVTARNQADQMIHGTKKQVEEAGEALPADEKAKIEAAIEALESVKSGDDKEAIDAKVQELMQAAQKLMEIAQQKAQAEQAGADAGEQPKQDDDVVDAEFEEVKEDKK.

Residue threonine 198 is modified to Phosphothreonine; by autocatalysis. Residues 601-615 (AQQKAQAEQAGADAG) show a composition bias toward low complexity. The interval 601–637 (AQQKAQAEQAGADAGEQPKQDDDVVDAEFEEVKEDKK) is disordered. Positions 623–637 (DVVDAEFEEVKEDKK) are enriched in acidic residues.

It belongs to the heat shock protein 70 family.

Acts as a chaperone. The sequence is that of Chaperone protein DnaK from Vibrio atlanticus (strain LGP32) (Vibrio splendidus (strain Mel32)).